The primary structure comprises 379 residues: Chaperone protein DnaJ (379 aa).

One can recognise a J domain in the interval 5-69 (DYYEVLGISK…NKRATIDQFG (65 aa)). Residues 136 to 218 (GTTKEISIRK…CHGKGTENKT (83 aa)) form a CR-type zinc finger. C149, C152, C166, C169, C192, C195, C206, and C209 together coordinate Zn(2+). CXXCXGXG motif repeat units follow at residues 149–156 (CETCHGDG), 166–173 (CSYCNGAG), 192–199 (CPKCNGSG), and 206–213 (CPTCHGKG).

The protein belongs to the DnaJ family. In terms of assembly, homodimer. Requires Zn(2+) as cofactor.

It is found in the cytoplasm. Participates actively in the response to hyperosmotic and heat shock by preventing the aggregation of stress-denatured proteins and by disaggregating proteins, also in an autonomous, DnaK-independent fashion. Unfolded proteins bind initially to DnaJ; upon interaction with the DnaJ-bound protein, DnaK hydrolyzes its bound ATP, resulting in the formation of a stable complex. GrpE releases ADP from DnaK; ATP binding to DnaK triggers the release of the substrate protein, thus completing the reaction cycle. Several rounds of ATP-dependent interactions between DnaJ, DnaK and GrpE are required for fully efficient folding. Also involved, together with DnaK and GrpE, in the DNA replication of plasmids through activation of initiation proteins. This chain is Chaperone protein DnaJ, found in Staphylococcus aureus.